The sequence spans 184 residues: MKNVTDSFVSLGHWPSAGSFGFNTDILATNPINLSVVLGVLIFFGKGVLSDLLDNRKQRILNTIRNSEELRGGAIEQLEKARSRLRKVETEAEQFRVNGYSEIEREKLNLINSTYKTLEQLENYKNETIQFEQQRAINQVRQRVFQQALRGALGTLNSCLNNELHLRTISANIGMLGTMKEITD.

A helical transmembrane segment spans residues leucine 27–leucine 49.

This sequence belongs to the ATPase B chain family. As to quaternary structure, F-type ATPases have 2 components, F(1) - the catalytic core - and F(0) - the membrane proton channel. F(1) has five subunits: alpha(3), beta(3), gamma(1), delta(1), epsilon(1). F(0) has four main subunits: a(1), b(1), b'(1) and c(10-14). The alpha and beta chains form an alternating ring which encloses part of the gamma chain. F(1) is attached to F(0) by a central stalk formed by the gamma and epsilon chains, while a peripheral stalk is formed by the delta, b and b' chains.

Its subcellular location is the plastid. It is found in the chloroplast thylakoid membrane. F(1)F(0) ATP synthase produces ATP from ADP in the presence of a proton or sodium gradient. F-type ATPases consist of two structural domains, F(1) containing the extramembraneous catalytic core and F(0) containing the membrane proton channel, linked together by a central stalk and a peripheral stalk. During catalysis, ATP synthesis in the catalytic domain of F(1) is coupled via a rotary mechanism of the central stalk subunits to proton translocation. Functionally, component of the F(0) channel, it forms part of the peripheral stalk, linking F(1) to F(0). The sequence is that of ATP synthase subunit b, chloroplastic from Solanum bulbocastanum (Wild potato).